Reading from the N-terminus, the 400-residue chain is Queuine tRNA-ribosyltransferase catalytic subunit (400 aa).

The Proton acceptor role is filled by aspartate 89. Residues 89-93, aspartate 143, glutamine 185, and glycine 212 each bind substrate; that span reads DSGGF. The segment at 243 to 249 is RNA binding; that stretch reads GVGFPVD. Catalysis depends on aspartate 262, which acts as the Nucleophile. Residues 267–271 are RNA binding; important for wobble base 34 recognition; it reads TRTAR. Cysteine 301, cysteine 303, cysteine 306, and histidine 331 together coordinate Zn(2+).

It belongs to the queuine tRNA-ribosyltransferase family. Heterodimer of a catalytic subunit and an accessory subunit. Zn(2+) is required as a cofactor.

It is found in the cytoplasm. It catalyses the reaction guanosine(34) in tRNA + queuine = queuosine(34) in tRNA + guanine. Catalytic subunit of the queuine tRNA-ribosyltransferase (TGT) that catalyzes the base-exchange of a guanine (G) residue with queuine (Q) at position 34 (anticodon wobble position) in tRNAs with GU(N) anticodons (tRNA-Asp, -Asn, -His and -Tyr), resulting in the hypermodified nucleoside queuosine (7-(((4,5-cis-dihydroxy-2-cyclopenten-1-yl)amino)methyl)-7-deazaguanosine). Catalysis occurs through a double-displacement mechanism. The nucleophile active site attacks the C1' of nucleotide 34 to detach the guanine base from the RNA, forming a covalent enzyme-RNA intermediate. The proton acceptor active site deprotonates the incoming queuine, allowing a nucleophilic attack on the C1' of the ribose to form the product. The chain is Queuine tRNA-ribosyltransferase catalytic subunit from Caenorhabditis elegans.